The sequence spans 128 residues: Glycine cleavage system H protein (128 aa).

The region spanning 25–107 (TITVGITHHA…YGAGWFFKIK (83 aa)) is the Lipoyl-binding domain. Lys66 is subject to N6-lipoyllysine.

Belongs to the GcvH family. As to quaternary structure, the glycine cleavage system is composed of four proteins: P, T, L and H. The cofactor is (R)-lipoate.

Functionally, the glycine cleavage system catalyzes the degradation of glycine. The H protein shuttles the methylamine group of glycine from the P protein to the T protein. The protein is Glycine cleavage system H protein of Neisseria meningitidis serogroup C (strain 053442).